Here is a 363-residue protein sequence, read N- to C-terminus: MKIILSGGGTGGHIYPALALAEVIRKHEPDTEFLYVGSERGVESNIVPATGMPFEKLTVQGFKRSFSLENIKTVSLFLKAVKEAKKIIKDFDPDVVVGTGGYVSGAVVYAAQRLHIPTVIHEQNSVAGVTNKFLSRGATKIGVAFDAALSQFPKDKVFVVGNPRAQQVASIKSNFSWQQIGLSDEKPSLLIFGGSQGAPPINLAVIDAMQEFNKRNYQVVIVTGPKRYENVLDRLTTQPADNVRILPYIENMPEVLAKTSAIVSRAGATSIAEITALGIPSILVPSPYVTGDHQTKNAQSLVDAGAALMITEPALSGKALLLAADSLLLNESVSKTMTEQAKNVGIRDAGDRLYALILDAIGE.

UDP-N-acetyl-alpha-D-glucosamine contacts are provided by residues 10 to 12 (TGG), asparagine 124, serine 195, isoleucine 249, and glutamine 294.

It belongs to the glycosyltransferase 28 family. MurG subfamily.

The protein resides in the cell membrane. It catalyses the reaction Mur2Ac(oyl-L-Ala-gamma-D-Glu-L-Lys-D-Ala-D-Ala)-di-trans,octa-cis-undecaprenyl diphosphate + UDP-N-acetyl-alpha-D-glucosamine = beta-D-GlcNAc-(1-&gt;4)-Mur2Ac(oyl-L-Ala-gamma-D-Glu-L-Lys-D-Ala-D-Ala)-di-trans,octa-cis-undecaprenyl diphosphate + UDP + H(+). Its pathway is cell wall biogenesis; peptidoglycan biosynthesis. Functionally, cell wall formation. Catalyzes the transfer of a GlcNAc subunit on undecaprenyl-pyrophosphoryl-MurNAc-pentapeptide (lipid intermediate I) to form undecaprenyl-pyrophosphoryl-MurNAc-(pentapeptide)GlcNAc (lipid intermediate II). In Leuconostoc mesenteroides subsp. mesenteroides (strain ATCC 8293 / DSM 20343 / BCRC 11652 / CCM 1803 / JCM 6124 / NCDO 523 / NBRC 100496 / NCIMB 8023 / NCTC 12954 / NRRL B-1118 / 37Y), this protein is UDP-N-acetylglucosamine--N-acetylmuramyl-(pentapeptide) pyrophosphoryl-undecaprenol N-acetylglucosamine transferase.